We begin with the raw amino-acid sequence, 258 residues long: Agamous-like MADS-box protein AGL3 (258 aa).

In terms of domain architecture, MADS-box spans 3–57 (RGKVELKRIENKINRQVTFAKRRNGLLKKAYELSVLCDAEIALLIFSNRGKLYEF). The region spanning 88 to 178 (LQDKYQDYLK…RRKLEDSDAA (91 aa)) is the K-box domain. The disordered stretch occupies residues 186 to 214 (SSAAEQQQQHQQQQQGMSSYQSNPPIQEA). Residues 191 to 200 (QQQQHQQQQQ) show a composition bias toward low complexity. Over residues 201–210 (GMSSYQSNPP) the composition is skewed to polar residues.

Forms homodimers. Interacts with TT16/AGL32. In terms of tissue distribution, expressed in aerial vegetative organs and flowers, but not in roots. Expressed in flower primordia.

It localises to the nucleus. Its function is as follows. Probable transcription factor that binds specifically to the CArG box DNA sequence 5'-CC (A/T)6 GG-3'. Plays an important role in the determination of flower meristem identity. Involved in the specification of sepal identity. Contributes to the development of petals, stamens and carpels. This is Agamous-like MADS-box protein AGL3 (AGL3) from Arabidopsis thaliana (Mouse-ear cress).